We begin with the raw amino-acid sequence, 290 residues long: Elongation factor Ts (290 aa).

Residues 82–85 (TDFV) form an involved in Mg(2+) ion dislocation from EF-Tu region.

The protein belongs to the EF-Ts family.

The protein resides in the cytoplasm. Its function is as follows. Associates with the EF-Tu.GDP complex and induces the exchange of GDP to GTP. It remains bound to the aminoacyl-tRNA.EF-Tu.GTP complex up to the GTP hydrolysis stage on the ribosome. This chain is Elongation factor Ts, found in Cellvibrio japonicus (strain Ueda107) (Pseudomonas fluorescens subsp. cellulosa).